Here is a 384-residue protein sequence, read N- to C-terminus: Probable circularly permuted 1,3-beta-glucanase PGA52 (384 aa).

A signal peptide spans 1–17 (MLFSSLLVSTLVSVATA). N118, N128, N170, N210, and N244 each carry an N-linked (GlcNAc...) asparagine glycan. Residues 254–259 (EFDIFE) carry the ExDxxE motif motif. 2 N-linked (GlcNAc...) asparagine glycosylation sites follow: N262 and N318. S361 carries the GPI-anchor amidated serine lipid modification. Residues 362 to 384 (GGVSYQPSFITNLLMTVLTLWVI) constitute a propeptide, removed in mature form.

The protein belongs to the PGA52 family.

Its subcellular location is the cell membrane. The catalysed reaction is Hydrolysis of (1-&gt;3)-beta-D-glucosidic linkages in (1-&gt;3)-beta-D-glucans.. Probable circularly permuted 1,3-beta-glucanase involved in cell wall modification through beta-1,3-glucan network alterations such as increased branching or remodeling. In Candida albicans (strain SC5314 / ATCC MYA-2876) (Yeast), this protein is Probable circularly permuted 1,3-beta-glucanase PGA52 (PGA52).